The following is a 104-amino-acid chain: Large ribosomal subunit protein uL24 (104 aa).

This sequence belongs to the universal ribosomal protein uL24 family. Part of the 50S ribosomal subunit.

Its function is as follows. One of two assembly initiator proteins, it binds directly to the 5'-end of the 23S rRNA, where it nucleates assembly of the 50S subunit. Functionally, one of the proteins that surrounds the polypeptide exit tunnel on the outside of the subunit. The sequence is that of Large ribosomal subunit protein uL24 from Pseudomonas entomophila (strain L48).